The chain runs to 440 residues: Xylose isomerase (440 aa).

Active-site residues include His-101 and Asp-104. The Mg(2+) site is built by Glu-232, Glu-268, His-271, Asp-296, Asp-307, Asp-309, and Asp-339.

Belongs to the xylose isomerase family. Homotetramer. Mg(2+) is required as a cofactor.

It localises to the cytoplasm. It carries out the reaction alpha-D-xylose = alpha-D-xylulofuranose. The protein is Xylose isomerase of Enterobacter sp. (strain 638).